Here is a 344-residue protein sequence, read N- to C-terminus: Follistatin (344 aa).

The first 29 residues, 1-29 (MARPRHQPGGLCLLLLLLCQFMEDRSAQA), serve as a signal peptide directing secretion. Positions 30–103 (GNCWLRQAKN…TCENVDCGPG (74 aa)) constitute a TB domain. Intrachain disulfides connect Cys32/Cys55, Cys42/Cys88, Cys56/Cys91, Cys95/Cys106, Cys100/Cys116, Cys118/Cys150, Cys122/Cys143, and Cys132/Cys164. Residues 94–117 (TCENVDCGPGKKCRMNKKNKPRCV) enclose the Follistatin-like 1 domain. Kazal-like domains are found at residues 112 to 166 (NKPR…KCKK), 186 to 241 (NAYC…KCIK), and 261 to 318 (KVGR…SCNS). N-linked (GlcNAc...) asparagine glycosylation is present at Asn124. A Follistatin-like 2 domain is found at 167–190 (TCRDVFCPGSSTCVVDQTNNAYCV). Cystine bridges form between Cys192/Cys225, Cys196/Cys218, and Cys207/Cys239. The region spanning 244-268 (SCDDIQCTGGKKCLWDFKVGRGRCS) is the Follistatin-like 3 domain. 3 disulfide bridges follow: Cys270–Cys302, Cys274–Cys295, and Cys284–Cys316. N-linked (GlcNAc...) asparagine glycosylation occurs at Asn288. Positions 316–344 (CNSISEDTEDEEEDEDQDYSFPISSILEW) are disordered. Residues 321 to 333 (EDTEDEEEDEDQD) are compositionally biased toward acidic residues.

Interacts with GDF11. Interacts with activin A/INHBA. Interacts with myostatin/MSTN.

The protein localises to the secreted. Its subcellular location is the nucleus. It is found in the nucleolus. Functionally, multifunctional regulatory protein whose primary function is to antagonize members of the transforming growth factor beta (TGF-beta) superfamily including activin, myostatin, GDF11 or bone morphogenetic proteins (BMPs). Mechanistically, binds to these ligands in the extracellular space, blocking their type II receptor-binding site to inhibit downstream signaling. Plays an essential role in muscle fiber formation and growth both by preventing the repressive effects of myostatin and through SMAD3/AKT/mTOR signaling independently of myostatin. Also promotes neural differentiation by antagonizing the action BMP4. Acts as a specific inhibitor of the biosynthesis and secretion of pituitary follicle stimulating hormone (FSH) by sequestering activin A/INHBA. On the other hand, translocates into the nucleus where it down-regulates rRNA synthesis and ribosome biogenesis to maintain cellular energy homeostasis by binding to rDNA. This Bos taurus (Bovine) protein is Follistatin.